The primary structure comprises 221 residues: MKLNKSTIEVLKNFAGINNGMVIHAGSRIRTQDNLNKQIAYADIEDSFPVEFAVYDLGEFLSALNLLDNAELDFQEKFVVVTGDGGTKLTFQYANAEFVTEAPEKVNFPTELDGGAEFDLKGEDLQRVKKASATLGLSDICVRTEAGSTAITLSATDAQGSSKHTFEINVGEADVDTEFKFFFKSERLNIVDQDYKVSIHPAGISRFLGLSLEYFIATEAL.

It belongs to the Tevenvirinae sliding clamp family. In terms of assembly, homotrimer. Interacts with the viral DNA polymerase; this interaction constitutes the polymerase holoenzyme. Interacts with the sliding-clamp-loader; this interaction allows the sliding-clamp-loader to open the sliding clamp. Interacts with the viral DNA ligase. Part of the replicase complex that includes the DNA polymerase, the polymerase clamp, the clamp loader complex, the single-stranded DNA binding protein, the primase, the helicase and the helicase assembly factor. Interacts with the viral RNA polymerase (RNAP). Part of the transcription activation complex containing host RNAP, the viral RNA polymerase sigma-like factor, the late transcription coactivator, and the sliding clamp.

Its function is as follows. Sliding clamp that encircles the genomic DNA and links the DNA polymerase to the template to control the processivity of DNA synthesis. Responsible for tethering the catalytic subunit of DNA polymerase to DNA during high-speed replication. Interaction with the sliding-clamp-loader opens the sliding clamp so that it can be loaded around the DNA template. During transcription, encircles the DNA and tethers host RNA polymerase (RNAP) to it. This is Sliding clamp from Vibrio phage KVP40 (isolate Vibrio parahaemolyticus/Japan/Matsuzaki/1991) (KVP40).